A 121-amino-acid polypeptide reads, in one-letter code: Cytochrome c2 iso-2 (121 aa).

Heme c contacts are provided by Cys15, Cys18, His19, and Met98.

The protein belongs to the cytochrome c family. Post-translationally, binds 1 heme c group covalently per subunit.

Its function is as follows. Cytochrome c2 is found mainly in purple, non-sulfur, photosynthetic bacteria where it functions as the electron donor to the oxidized bacteriochlorophyll in the photophosphorylation pathway. However, it may also have a role in the respiratory chain and is found in some non-photosynthetic bacteria. The protein is Cytochrome c2 iso-2 of Rhodospirillum centenum (Rhodocista centenaria).